A 262-amino-acid chain; its full sequence is MKNKVLKLKNNKIFDKKLATFLKNLDIFPNNWEFFEKAFIHASYINEHEDVSESYDRLEFLGDALIDFVVAKKLFELYPKYNEGLLTRTKIEIVKGENLNRIGMELKLGDFVKLSNGAELTENTVGDVLEALVGAIYEDMGMKKATEFVEKYIFERTFSEILKYDFFSLFQEQKLPEPRVRVSLTSNNLVLSIIELDGDIIWSQAIPNNKNYDDKSVLEHNAMASFTSFLKSSKGSHFFSDLKEKIENQKMCKKLAIKPKKN.

Residues 18-141 (LATFLKNLDI…LVGAIYEDMG (124 aa)) form the RNase III domain. Glu-59 is a binding site for Mg(2+). Residue Asp-63 is part of the active site. Mg(2+) is bound by residues Asp-127 and Glu-130. The active site involves Glu-130.

Belongs to the ribonuclease III family. In terms of assembly, homodimer. Mg(2+) serves as cofactor.

Its subcellular location is the cytoplasm. It catalyses the reaction Endonucleolytic cleavage to 5'-phosphomonoester.. Functionally, digests double-stranded RNA. Involved in the processing of primary rRNA transcript to yield the immediate precursors to the large and small rRNAs (23S and 16S). Processes some mRNAs, and tRNAs when they are encoded in the rRNA operon. Processes pre-crRNA and tracrRNA of type II CRISPR loci if present in the organism. The protein is Ribonuclease 3 of Mycoplasma genitalium (strain ATCC 33530 / DSM 19775 / NCTC 10195 / G37) (Mycoplasmoides genitalium).